A 344-amino-acid polypeptide reads, in one-letter code: Arginine N-succinyltransferase (344 aa).

Position 125 (leucine 125) interacts with succinyl-CoA. The Proton donor role is filled by histidine 229.

Belongs to the arginine N-succinyltransferase family.

It carries out the reaction succinyl-CoA + L-arginine = N(2)-succinyl-L-arginine + CoA + H(+). Its pathway is amino-acid degradation; L-arginine degradation via AST pathway; L-glutamate and succinate from L-arginine: step 1/5. In terms of biological role, catalyzes the transfer of succinyl-CoA to arginine to produce N(2)-succinylarginine. The chain is Arginine N-succinyltransferase from Escherichia coli (strain UTI89 / UPEC).